The following is a 341-amino-acid chain: MLVLGLETSCDETGVALYDSERGLLADALFSQIDLHRAYGGVVPELASRDHVKRMLPLIRQTLAEADCVATDIDAIAYTAGPGLVGALLVGASCAQALAFAWDIPALGVHHMEGHLLAPMLEENPPQFPFVALLVSGGHTQLVRVDGIGQYELLGETLDDAAGEAFDKTAKMMGMQYPGGPEISKAALQGVPGRFVFPRPMTDRPGLAFSFSGLKTSALNTWQQCQSAGDDSEQTRCDIALAFQQAVVETLTIKCKRALKQTGLKSLVIAGGVSANKALRVSLESMLGELRGHVYYARPEFCTDNGAMIAFAGCQRLQAGQKEDLSISVQARWPMEQLSGL.

Residues H111 and H115 each contribute to the Fe cation site. Substrate contacts are provided by residues 134 to 138 (LVSGG), D167, G180, and N276. D304 contacts Fe cation.

This sequence belongs to the KAE1 / TsaD family. The cofactor is Fe(2+).

The protein resides in the cytoplasm. It carries out the reaction L-threonylcarbamoyladenylate + adenosine(37) in tRNA = N(6)-L-threonylcarbamoyladenosine(37) in tRNA + AMP + H(+). Its function is as follows. Required for the formation of a threonylcarbamoyl group on adenosine at position 37 (t(6)A37) in tRNAs that read codons beginning with adenine. Is involved in the transfer of the threonylcarbamoyl moiety of threonylcarbamoyl-AMP (TC-AMP) to the N6 group of A37, together with TsaE and TsaB. TsaD likely plays a direct catalytic role in this reaction. The sequence is that of tRNA N6-adenosine threonylcarbamoyltransferase from Pseudomonas syringae pv. tomato (strain ATCC BAA-871 / DC3000).